Consider the following 446-residue polypeptide: UDP-N-acetylmuramate--L-alanine ligase (446 aa).

122-128 (GTHGKTT) lines the ATP pocket.

The protein belongs to the MurCDEF family.

The protein localises to the cytoplasm. It catalyses the reaction UDP-N-acetyl-alpha-D-muramate + L-alanine + ATP = UDP-N-acetyl-alpha-D-muramoyl-L-alanine + ADP + phosphate + H(+). It functions in the pathway cell wall biogenesis; peptidoglycan biosynthesis. Cell wall formation. The protein is UDP-N-acetylmuramate--L-alanine ligase of Nocardioides sp. (strain ATCC BAA-499 / JS614).